The sequence spans 489 residues: Nuclear distribution protein PAC1 (489 aa).

Residues 66–98 (STVLRLQKKIIDLENEISNLNNIINSSNSDNNG) are a coiled coil. WD repeat units follow at residues 119–158 (QCEN…NTIP), 164–205 (AHTR…RTLN), 206–246 (GHEH…SLKS), 249–291 (GHSE…GLAM), 328–368 (IPLE…IAPH), 389–428 (GHSS…ETGS), and 437–486 (GHDG…NSIK).

It belongs to the WD repeat LIS1/nudF family. In terms of assembly, self-associates. Interacts with NDL1 and dynein.

The protein resides in the cytoplasm. The protein localises to the cytoskeleton. It localises to the spindle pole. Functionally, positively regulates the activity of the minus-end directed microtubule motor protein dynein. Plays a central role in positioning the mitotic spindle at the bud neck during cell division. Targets cytoplasmic dynein to microtubule plus ends, thereby promoting dynein-mediated microtubule sliding along the bud cortex and consequently the movement of the mitotic spindle to the bud neck. This chain is Nuclear distribution protein PAC1, found in Candida dubliniensis (strain CD36 / ATCC MYA-646 / CBS 7987 / NCPF 3949 / NRRL Y-17841) (Yeast).